The chain runs to 229 residues: N-acetyltransferase MPR1 (229 aa).

The 155-residue stretch at 65–219 (FNLEIESGKT…DAIIYGKDLT (155 aa)) folds into the N-acetyltransferase domain. Position 135 (N135) interacts with substrate. 145-150 (RGQKVG) is a CoA binding site. 172-173 (NL) provides a ligand contact to substrate.

This sequence belongs to the acetyltransferase family. Homodimer. Not glycosylated.

Its subcellular location is the cytoplasm. It is found in the mitochondrion. It carries out the reaction L-glutamate 5-semialdehyde + acetyl-CoA = N-acetyl-L-glutamate 5-semialdehyde + CoA + H(+). Its function is as follows. N-acetyltransferase involved in oxidative stress resistance. Acetylates the toxic proline metabolism intermediate (S)-1-pyrroline-5-carboxylate (P5C), or more likely its spontaneously forming tautomer glutamate-5-semialdehyde (GSA) into N-acetyl-GSA for arginine synthesis in the mitochondria. P5C has been shown to increase the levels of reactive oxygen species (ROS) in the cell by inhibiting the function of the respiratory chain in the mitochondria. The enzyme is able to reduce intracellular ROS levels under P5C-induced oxidative stress and protects cells from damage by oxidative stress. Also acetylates and thereby detoxifies the proline analog azetidine-2-carboxylate (AZC), however it is unlikely that AZC is a natural substrate as it occurs only in plants belonging to the Lilaceae family. Does not acetylate proline. This is N-acetyltransferase MPR1 from Saccharomyces cerevisiae (Baker's yeast).